Consider the following 254-residue polypeptide: Flagellar L-ring protein 1 (254 aa).

Residues 1–26 (MSPFSSAFRPRRIAISALLLAIGALA) form the signal peptide.

It belongs to the FlgH family. As to quaternary structure, the basal body constitutes a major portion of the flagellar organelle and consists of four rings (L,P,S, and M) mounted on a central rod.

The protein resides in the cell outer membrane. The protein localises to the bacterial flagellum basal body. Its function is as follows. Assembles around the rod to form the L-ring and probably protects the motor/basal body from shearing forces during rotation. In Bradyrhizobium diazoefficiens (strain JCM 10833 / BCRC 13528 / IAM 13628 / NBRC 14792 / USDA 110), this protein is Flagellar L-ring protein 1 (flgH1).